The chain runs to 382 residues: UDP-N-acetylglucosamine--N-acetylmuramyl-(pentapeptide) pyrophosphoryl-undecaprenol N-acetylglucosamine transferase (382 aa).

Residues 11-13 (TGG), Asn-117, Arg-160, Ser-209, and Gln-311 each bind UDP-N-acetyl-alpha-D-glucosamine.

This sequence belongs to the glycosyltransferase 28 family. MurG subfamily.

Its subcellular location is the cell inner membrane. It catalyses the reaction di-trans,octa-cis-undecaprenyl diphospho-N-acetyl-alpha-D-muramoyl-L-alanyl-D-glutamyl-meso-2,6-diaminopimeloyl-D-alanyl-D-alanine + UDP-N-acetyl-alpha-D-glucosamine = di-trans,octa-cis-undecaprenyl diphospho-[N-acetyl-alpha-D-glucosaminyl-(1-&gt;4)]-N-acetyl-alpha-D-muramoyl-L-alanyl-D-glutamyl-meso-2,6-diaminopimeloyl-D-alanyl-D-alanine + UDP + H(+). The protein operates within cell wall biogenesis; peptidoglycan biosynthesis. Its function is as follows. Cell wall formation. Catalyzes the transfer of a GlcNAc subunit on undecaprenyl-pyrophosphoryl-MurNAc-pentapeptide (lipid intermediate I) to form undecaprenyl-pyrophosphoryl-MurNAc-(pentapeptide)GlcNAc (lipid intermediate II). This chain is UDP-N-acetylglucosamine--N-acetylmuramyl-(pentapeptide) pyrophosphoryl-undecaprenol N-acetylglucosamine transferase, found in Rickettsia akari (strain Hartford).